The sequence spans 716 residues: Fatty acid oxidation complex subunit alpha (716 aa).

Residues 1–189 (MIYQSPTIQV…KVGAVDAVVA (189 aa)) form an enoyl-CoA hydratase/isomerase region. Asp-296 is a binding site for substrate. Positions 311 to 716 (KEVNNAAVLG…AANNGSYYQA (406 aa)) are 3-hydroxyacyl-CoA dehydrogenase. NAD(+) is bound by residues Met-324, Asp-343, 400 to 402 (VVE), Lys-407, and Ser-429. The For 3-hydroxyacyl-CoA dehydrogenase activity role is filled by His-450. Asn-453 lines the NAD(+) pocket. 2 residues coordinate substrate: Asn-500 and Tyr-660.

This sequence in the N-terminal section; belongs to the enoyl-CoA hydratase/isomerase family. It in the C-terminal section; belongs to the 3-hydroxyacyl-CoA dehydrogenase family. Heterotetramer of two alpha chains (FadB) and two beta chains (FadA).

It catalyses the reaction a (3S)-3-hydroxyacyl-CoA + NAD(+) = a 3-oxoacyl-CoA + NADH + H(+). The catalysed reaction is a (3S)-3-hydroxyacyl-CoA = a (2E)-enoyl-CoA + H2O. It carries out the reaction a 4-saturated-(3S)-3-hydroxyacyl-CoA = a (3E)-enoyl-CoA + H2O. The enzyme catalyses (3S)-3-hydroxybutanoyl-CoA = (3R)-3-hydroxybutanoyl-CoA. It catalyses the reaction a (3Z)-enoyl-CoA = a 4-saturated (2E)-enoyl-CoA. The catalysed reaction is a (3E)-enoyl-CoA = a 4-saturated (2E)-enoyl-CoA. Its pathway is lipid metabolism; fatty acid beta-oxidation. Involved in the aerobic and anaerobic degradation of long-chain fatty acids via beta-oxidation cycle. Catalyzes the formation of 3-oxoacyl-CoA from enoyl-CoA via L-3-hydroxyacyl-CoA. It can also use D-3-hydroxyacyl-CoA and cis-3-enoyl-CoA as substrate. This Shewanella baltica (strain OS155 / ATCC BAA-1091) protein is Fatty acid oxidation complex subunit alpha.